A 154-amino-acid polypeptide reads, in one-letter code: Probable cyclic pyranopterin monophosphate synthase (154 aa).

Substrate-binding positions include L74–H76 and M110–E111. Residue D125 is part of the active site.

It belongs to the MoaC family. As to quaternary structure, homohexamer; trimer of dimers.

It catalyses the reaction (8S)-3',8-cyclo-7,8-dihydroguanosine 5'-triphosphate = cyclic pyranopterin phosphate + diphosphate. It participates in cofactor biosynthesis; molybdopterin biosynthesis. Catalyzes the conversion of (8S)-3',8-cyclo-7,8-dihydroguanosine 5'-triphosphate to cyclic pyranopterin monophosphate (cPMP). The chain is Probable cyclic pyranopterin monophosphate synthase from Methanosphaerula palustris (strain ATCC BAA-1556 / DSM 19958 / E1-9c).